The chain runs to 908 residues: Protein translocase subunit SecA (908 aa).

Residues Gln-90, 108-112 (GEGKT), and Asp-503 each bind ATP. Residues 846–864 (AAAAEAPVAPAPQPAAAAP) are compositionally biased toward low complexity. The disordered stretch occupies residues 846-884 (AAAAEAPVAPAPQPAAAAPQPTPELVGAEAGEPDPAAWG). Positions 892, 894, 903, and 904 each coordinate Zn(2+).

Belongs to the SecA family. As to quaternary structure, monomer and homodimer. Part of the essential Sec protein translocation apparatus which comprises SecA, SecYEG and auxiliary proteins SecDF-YajC and YidC. Zn(2+) is required as a cofactor.

It localises to the cell inner membrane. The protein localises to the cytoplasm. The catalysed reaction is ATP + H2O + cellular proteinSide 1 = ADP + phosphate + cellular proteinSide 2.. Functionally, part of the Sec protein translocase complex. Interacts with the SecYEG preprotein conducting channel. Has a central role in coupling the hydrolysis of ATP to the transfer of proteins into and across the cell membrane, serving both as a receptor for the preprotein-SecB complex and as an ATP-driven molecular motor driving the stepwise translocation of polypeptide chains across the membrane. This Cereibacter sphaeroides (strain ATCC 17029 / ATH 2.4.9) (Rhodobacter sphaeroides) protein is Protein translocase subunit SecA.